Consider the following 419-residue polypeptide: Tyrosine--tRNA ligase (419 aa).

Tyr34 is a binding site for L-tyrosine. The 'HIGH' region motif lies at 39 to 48 (PTADSLHLGN). L-tyrosine is bound by residues Tyr169 and Gln173. A 'KMSKS' region motif is present at residues 229 to 233 (KFGKS). ATP is bound at residue Lys232. The 67-residue stretch at 353-419 (LTLIELLISA…GKKKNFVLTY (67 aa)) folds into the S4 RNA-binding domain.

This sequence belongs to the class-I aminoacyl-tRNA synthetase family. TyrS type 1 subfamily. As to quaternary structure, homodimer.

It localises to the cytoplasm. The enzyme catalyses tRNA(Tyr) + L-tyrosine + ATP = L-tyrosyl-tRNA(Tyr) + AMP + diphosphate + H(+). Its function is as follows. Catalyzes the attachment of tyrosine to tRNA(Tyr) in a two-step reaction: tyrosine is first activated by ATP to form Tyr-AMP and then transferred to the acceptor end of tRNA(Tyr). In Lactococcus lactis subsp. cremoris (strain SK11), this protein is Tyrosine--tRNA ligase.